Here is a 177-residue protein sequence, read N- to C-terminus: Ribosome rescue factor SmrB (177 aa).

The region spanning 98–173 is the Smr domain; it reads LDMHGMKQDE…GAGAILVLLS (76 aa).

The protein belongs to the SmrB family. In terms of assembly, associates with collided ribosomes, but not with correctly translating polysomes.

Functionally, acts as a ribosome collision sensor. Detects stalled/collided disomes (pairs of ribosomes where the leading ribosome is stalled and a second ribosome has collided with it) and endonucleolytically cleaves mRNA at the 5' boundary of the stalled ribosome. Stalled/collided disomes form a new interface (primarily via the 30S subunits) that binds SmrB. Cleaved mRNA becomes available for tmRNA ligation, leading to ribosomal subunit dissociation and rescue of stalled ribosomes. The protein is Ribosome rescue factor SmrB of Aliivibrio fischeri (strain ATCC 700601 / ES114) (Vibrio fischeri).